A 275-amino-acid chain; its full sequence is uncharacterized protein (275 aa).

This is an uncharacterized protein from Acanthamoeba polyphaga mimivirus (APMV).